Reading from the N-terminus, the 535-residue chain is ATP-dependent RNA helicase DBP3 (535 aa).

The segment covering 1 to 21 (MSKHELKDKKRKSVDGEDVSK) has biased composition (basic and acidic residues). The tract at residues 1–82 (MSKHELKDKK…GSETAPVGDS (82 aa)) is disordered. The span at 22–33 (SKKVKKDKKDKK) shows a compositional bias: basic residues. A compositionally biased stretch (basic and acidic residues) spans 34 to 72 (DKKAKDGNDKVKDKKDKNKKDKSKTDKNLKEVQETEAHT). The Q motif motif lies at 125 to 151 (LSFSHLNLHSAIQKEISKFPKPTPIQA). Residues 154 to 327 (WPYLLAGKDV…STFMRAPVKV (174 aa)) form the Helicase ATP-binding domain. Position 167–174 (167–174 (AETGSGKT)) interacts with ATP. The DEAD box motif lies at 274 to 277 (DEAD). The 154-residue stretch at 352–505 (KKEKRLLELL…PVPEELMKFG (154 aa)) folds into the Helicase C-terminal domain.

The protein belongs to the DEAD box helicase family. DDX5/DBP2 subfamily.

The protein localises to the nucleus. It localises to the nucleolus. It carries out the reaction ATP + H2O = ADP + phosphate + H(+). Its function is as follows. ATP-dependent RNA helicase required for 60S ribosomal subunit synthesis. Involved in efficient pre-rRNA processing, predominantly at site A3, which is necessary for the normal formation of 25S and 5.8S rRNAs. In Eremothecium gossypii (strain ATCC 10895 / CBS 109.51 / FGSC 9923 / NRRL Y-1056) (Yeast), this protein is ATP-dependent RNA helicase DBP3 (DBP3).